Reading from the N-terminus, the 499-residue chain is L-asparagine permease (499 aa).

A run of 12 helical transmembrane segments spans residues 34–54, 58–78, 109–129, 146–166, 171–191, 219–239, 264–284, 298–318, 353–373, 378–398, 422–442, and 448–468; these read QVQM…GAGA, MAGP…FFIL, VAGW…ITAV, VFAL…VKWF, FWFA…GTVF, LLPA…IEMV, IGLF…WSAY, LGVP…ALSS, YAGI…NYLV, FEIV…FIIV, APFT…LMAF, and TYTI…WFGV.

This sequence belongs to the amino acid-polyamine-organocation (APC) superfamily. Amino acid transporter (AAT) (TC 2.A.3.1) family.

Its subcellular location is the cell inner membrane. The protein is L-asparagine permease (ansP) of Escherichia coli (strain K12).